The chain runs to 212 residues: Adenine phosphoribosyltransferase (212 aa).

This sequence belongs to the purine/pyrimidine phosphoribosyltransferase family. Homodimer.

Its subcellular location is the cytoplasm. The enzyme catalyses AMP + diphosphate = 5-phospho-alpha-D-ribose 1-diphosphate + adenine. The protein operates within purine metabolism; AMP biosynthesis via salvage pathway; AMP from adenine: step 1/1. Functionally, catalyzes a salvage reaction resulting in the formation of AMP, that is energically less costly than de novo synthesis. In Mycobacterium tuberculosis (strain CDC 1551 / Oshkosh), this protein is Adenine phosphoribosyltransferase.